Here is a 462-residue protein sequence, read N- to C-terminus: NAD(P) transhydrogenase subunit beta (462 aa).

At 1 to 3 (MSG) the chain is on the periplasmic side. A helical membrane pass occupies residues 4-24 (GLVTAAYIVAAILFIFSLAGL). Topologically, residues 25–45 (SKHETSRQGNNFGIAGMAIAL) are cytoplasmic. A helical membrane pass occupies residues 46–66 (IATIFGPDTGNVGWILLAMVI). The Periplasmic segment spans residues 67–82 (GGAIGIRLAKKVEMTE). A helical membrane pass occupies residues 83 to 103 (MPELVAILHSFVGLAAVLVGF). Residues 104–115 (NSYLHHDAGMAP) are Cytoplasmic-facing. The helical transmembrane segment at 116–136 (ILVNIHLTEVFLGIFIGAVTF) threads the bilayer. The Periplasmic segment spans residues 137 to 164 (TGSVVAFGKLCGKISSKPLMLPNRHKMN). A helical membrane pass occupies residues 165-185 (LAALVVSFLLLIVFVRTDSVG). Residues 186–188 (LQV) lie on the Cytoplasmic side of the membrane. A helical transmembrane segment spans residues 189-209 (LALLIMTAIALVFGWHLVASI). At 210 to 215 (GGADMP) the chain is on the periplasmic side. Residues 216 to 236 (VVVSMLNSYSGWAAAAAGFML) form a helical membrane-spanning segment. Residues 237 to 239 (SND) lie on the Cytoplasmic side of the membrane. The helical transmembrane segment at 240 to 260 (LLIVTGALVGSSGAILSYIMC) threads the bilayer. At 261–308 (KAMNRSFISVIAGGFGTDGSSTGDDQEVGEHREITAEETAELLKNSHS) the chain is on the periplasmic side. The chain crosses the membrane as a helical span at residues 309–329 (VIITPGYGMAVAQAQYPVAEI). The Cytoplasmic segment spans residues 330–462 (TEKLRARGIN…ASVDAILKAL (133 aa)).

Belongs to the PNT beta subunit family. In terms of assembly, heterodimer of an alpha and a beta chain.

The protein resides in the cell inner membrane. It carries out the reaction NAD(+) + NADPH + H(+)(in) = NADH + NADP(+) + H(+)(out). The transhydrogenation between NADH and NADP is coupled to respiration and ATP hydrolysis and functions as a proton pump across the membrane. In Escherichia coli O157:H7, this protein is NAD(P) transhydrogenase subunit beta (pntB).